A 119-amino-acid chain; its full sequence is Small ribosomal subunit protein bS16 (119 aa).

The protein belongs to the bacterial ribosomal protein bS16 family.

The protein is Small ribosomal subunit protein bS16 of Chlamydia felis (strain Fe/C-56) (Chlamydophila felis).